We begin with the raw amino-acid sequence, 269 residues long: Energy-coupling factor transporter ATP-binding protein EcfA1 (269 aa).

Positions 8–242 (ITFNHVRFKY…GDGLTEIGLD (235 aa)) constitute an ABC transporter domain. 42–49 (GHNGSGKS) contacts ATP.

This sequence belongs to the ABC transporter superfamily. Energy-coupling factor EcfA family. As to quaternary structure, forms a stable energy-coupling factor (ECF) transporter complex composed of 2 membrane-embedded substrate-binding proteins (S component), 2 ATP-binding proteins (A component) and 2 transmembrane proteins (T component).

Its subcellular location is the cell membrane. In terms of biological role, ATP-binding (A) component of a common energy-coupling factor (ECF) ABC-transporter complex. Unlike classic ABC transporters this ECF transporter provides the energy necessary to transport a number of different substrates. The sequence is that of Energy-coupling factor transporter ATP-binding protein EcfA1 from Staphylococcus saprophyticus subsp. saprophyticus (strain ATCC 15305 / DSM 20229 / NCIMB 8711 / NCTC 7292 / S-41).